The primary structure comprises 171 residues: 3-hydroxydecanoyl-[acyl-carrier-protein] dehydratase (171 aa).

Histidine 70 is an active-site residue.

It belongs to the thioester dehydratase family. FabA subfamily. As to quaternary structure, homodimer.

It is found in the cytoplasm. It catalyses the reaction a (3R)-hydroxyacyl-[ACP] = a (2E)-enoyl-[ACP] + H2O. The catalysed reaction is (3R)-hydroxydecanoyl-[ACP] = (2E)-decenoyl-[ACP] + H2O. It carries out the reaction (2E)-decenoyl-[ACP] = (3Z)-decenoyl-[ACP]. The protein operates within lipid metabolism; fatty acid biosynthesis. In terms of biological role, necessary for the introduction of cis unsaturation into fatty acids. Catalyzes the dehydration of (3R)-3-hydroxydecanoyl-ACP to E-(2)-decenoyl-ACP and then its isomerization to Z-(3)-decenoyl-ACP. Can catalyze the dehydratase reaction for beta-hydroxyacyl-ACPs with saturated chain lengths up to 16:0, being most active on intermediate chain length. This chain is 3-hydroxydecanoyl-[acyl-carrier-protein] dehydratase, found in Shewanella frigidimarina (strain NCIMB 400).